The primary structure comprises 384 residues: Zinc metalloproteinase nas-12 (384 aa).

The N-terminal stretch at 1 to 25 is a signal peptide; the sequence is MLYIPQFSIYFCLGYLLLFCKISNA. In terms of domain architecture, Peptidase M12A spans 73–271; that stretch reads VSIKGSSMNR…EKLNRLGQCG (199 aa). 5 cysteine pairs are disulfide-bonded: Cys-116-Cys-270, Cys-137-Cys-156, Cys-287-Cys-325, Cys-296-Cys-318, and Cys-305-Cys-322. His-164 provides a ligand contact to Zn(2+). The active site involves Glu-165. Residues His-168 and His-174 each contribute to the Zn(2+) site. Residues 287–325 form the ShKT 1 domain; sequence CQDVATAVSCEGNRRRGMCKNPFYKQMMIKSCQKTCRLC. Residue Asn-340 is glycosylated (N-linked (GlcNAc...) asparagine). 3 disulfides stabilise this stretch: Cys-348-Cys-384, Cys-355-Cys-377, and Cys-364-Cys-381. One can recognise a ShKT 2 domain in the interval 348–384; that stretch reads CEDKHPRCDIYSHNGFCTLPFYDDVRYQLCAKTCNLC.

It depends on Zn(2+) as a cofactor. In terms of tissue distribution, expressed in pharyngeal glands.

It localises to the secreted. In terms of biological role, metalloprotease. The protein is Zinc metalloproteinase nas-12 (nas-12) of Caenorhabditis elegans.